The primary structure comprises 149 residues: Macrodomain Ter protein (149 aa).

This sequence belongs to the MatP family. In terms of assembly, homodimer.

It localises to the cytoplasm. Its function is as follows. Required for spatial organization of the terminus region of the chromosome (Ter macrodomain) during the cell cycle. Prevents early segregation of duplicated Ter macrodomains during cell division. Binds specifically to matS, which is a 13 bp signature motif repeated within the Ter macrodomain. This is Macrodomain Ter protein from Vibrio campbellii (strain ATCC BAA-1116).